The following is a 265-amino-acid chain: Thiazole synthase (265 aa).

Lys-106 functions as the Schiff-base intermediate with DXP in the catalytic mechanism. Residues Gly-167, 193–194 (AG), and 215–216 (NT) each bind 1-deoxy-D-xylulose 5-phosphate. A disordered region spans residues 245–265 (GRIPRRARAEPSSPQLGLVGS).

Belongs to the ThiG family. As to quaternary structure, homotetramer. Forms heterodimers with either ThiH or ThiS.

It is found in the cytoplasm. It catalyses the reaction [ThiS sulfur-carrier protein]-C-terminal-Gly-aminoethanethioate + 2-iminoacetate + 1-deoxy-D-xylulose 5-phosphate = [ThiS sulfur-carrier protein]-C-terminal Gly-Gly + 2-[(2R,5Z)-2-carboxy-4-methylthiazol-5(2H)-ylidene]ethyl phosphate + 2 H2O + H(+). The protein operates within cofactor biosynthesis; thiamine diphosphate biosynthesis. In terms of biological role, catalyzes the rearrangement of 1-deoxy-D-xylulose 5-phosphate (DXP) to produce the thiazole phosphate moiety of thiamine. Sulfur is provided by the thiocarboxylate moiety of the carrier protein ThiS. In vitro, sulfur can be provided by H(2)S. The protein is Thiazole synthase of Methylobacterium sp. (strain 4-46).